We begin with the raw amino-acid sequence, 89 residues long: Small ribosomal subunit protein uS15 (89 aa).

This sequence belongs to the universal ribosomal protein uS15 family. Part of the 30S ribosomal subunit. Forms a bridge to the 50S subunit in the 70S ribosome, contacting the 23S rRNA.

In terms of biological role, one of the primary rRNA binding proteins, it binds directly to 16S rRNA where it helps nucleate assembly of the platform of the 30S subunit by binding and bridging several RNA helices of the 16S rRNA. Its function is as follows. Forms an intersubunit bridge (bridge B4) with the 23S rRNA of the 50S subunit in the ribosome. This chain is Small ribosomal subunit protein uS15, found in Renibacterium salmoninarum (strain ATCC 33209 / DSM 20767 / JCM 11484 / NBRC 15589 / NCIMB 2235).